The following is a 31-amino-acid chain: Chassatide C5 (31 aa).

Residues 1-31 (GVIPCGESCVFIPCISSVVGCSCKNKVCYRN) constitute a cross-link (cyclopeptide (Gly-Asn)). Disulfide bonds link cysteine 5–cysteine 21, cysteine 9–cysteine 23, and cysteine 14–cysteine 28.

This is a cyclic peptide. As to expression, expressed in pedicel, root and stem but not in leaf and fruit (at protein level).

In terms of biological role, probably participates in a plant defense mechanism. The chain is Chassatide C5 from Chassalia chartacea (Chassalia curviflora).